Here is a 241-residue protein sequence, read N- to C-terminus: DNA repair protein RecO (241 aa).

This sequence belongs to the RecO family.

Involved in DNA repair and RecF pathway recombination. The sequence is that of DNA repair protein RecO from Yersinia enterocolitica serotype O:8 / biotype 1B (strain NCTC 13174 / 8081).